Here is a 133-residue protein sequence, read N- to C-terminus: Small ribosomal subunit protein mS23 (133 aa).

The protein belongs to the mitochondrion-specific ribosomal protein mS23 family. As to quaternary structure, component of the mitochondrial ribosome small subunit (28S) which comprises a 12S rRNA and about 30 distinct proteins.

The protein localises to the mitochondrion. This is Small ribosomal subunit protein mS23 (mrps-23) from Caenorhabditis elegans.